The primary structure comprises 273 residues: Glutamate transport system permease protein GluD (273 aa).

Transmembrane regions (helical) follow at residues 26–46 (ILPGLWGTLKSAVFSVILALV), 64–84 (WFCAVIIETFRAIPVLILMIF), 100–120 (LAFAAVVFGLTMYNGSVIAEI), 150–170 (ILLPQAVAAMLPALISQMVIA), and 200–220 (LAALFVVALIMIVLNFSLTAL). In terms of domain architecture, ABC transmembrane type-1 spans 30–221 (LWGTLKSAVF…VLNFSLTALA (192 aa)). The segment at 242 to 273 (PEQPDQGLETKDNVNVDWQDPDYKDLKTPGVQ) is disordered. The segment covering 262–273 (PDYKDLKTPGVQ) has biased composition (basic and acidic residues).

Belongs to the binding-protein-dependent transport system permease family. HisMQ subfamily. The complex is composed of two ATP-binding proteins (GluA), two transmembrane proteins (GluC and GluD) and a solute-binding protein (GluB).

The protein resides in the cell membrane. In terms of biological role, part of the ABC transporter complex GluABCD involved in glutamate uptake. Probably responsible for the translocation of the substrate across the membrane. The chain is Glutamate transport system permease protein GluD from Corynebacterium glutamicum (strain ATCC 13032 / DSM 20300 / JCM 1318 / BCRC 11384 / CCUG 27702 / LMG 3730 / NBRC 12168 / NCIMB 10025 / NRRL B-2784 / 534).